Reading from the N-terminus, the 609-residue chain is Elongation factor 4 (609 aa).

The tr-type G domain occupies 11 to 193; sequence ERIRNFSIIA…QIVEKIPAPS (183 aa). GTP is bound by residues 23 to 28 and 140 to 143; these read DHGKST and NKID.

Belongs to the TRAFAC class translation factor GTPase superfamily. Classic translation factor GTPase family. LepA subfamily.

It localises to the cell membrane. The catalysed reaction is GTP + H2O = GDP + phosphate + H(+). Required for accurate and efficient protein synthesis under certain stress conditions. May act as a fidelity factor of the translation reaction, by catalyzing a one-codon backward translocation of tRNAs on improperly translocated ribosomes. Back-translocation proceeds from a post-translocation (POST) complex to a pre-translocation (PRE) complex, thus giving elongation factor G a second chance to translocate the tRNAs correctly. Binds to ribosomes in a GTP-dependent manner. The polypeptide is Elongation factor 4 (Geobacillus thermodenitrificans (strain NG80-2)).